We begin with the raw amino-acid sequence, 241 residues long: Small ribosomal subunit protein uS2 (241 aa).

It belongs to the universal ribosomal protein uS2 family.

The sequence is that of Small ribosomal subunit protein uS2 from Shigella flexneri serotype 5b (strain 8401).